Consider the following 303-residue polypeptide: Acetaldehyde dehydrogenase 2 (303 aa).

The active-site Acyl-thioester intermediate is the Cys-130. Residues 161–169 (SVGPGTRKN) and Asn-272 each bind NAD(+).

The protein belongs to the acetaldehyde dehydrogenase family.

It carries out the reaction acetaldehyde + NAD(+) + CoA = acetyl-CoA + NADH + H(+). This is Acetaldehyde dehydrogenase 2 from Burkholderia vietnamiensis (strain G4 / LMG 22486) (Burkholderia cepacia (strain R1808)).